The sequence spans 1196 residues: MPGKLVGSSEEAARTGTQANAHAEDHSDLEHSAPSTDDGFDEPKPPIAKSVPPSTAIPKKNNFKHRGDTKNVKPPTLEEMKELRDTQNLFHSNLFKLQVKEMLEELQLKQKYTDFIENWLESFTVFTRQLKDGLMERTHLEVPMKLSEKPTGFVFSKPTREPYLIGAAATGTLLGPKIVVDVALEMPKESLHKEDYLNLRYDQKRALYLTYVTERMMESQNYAQDQFNFNYYANNPLKPVLELIPVTKQVNKHLQVRLFITAPLSSFKPGRFVPWNNNIRPSFYGDEWDEQDPLPSTQHYNANVLFDLTLSENQAQLDKAFKSRRNFQDGLLLLKVWLRQRQLDIGYSGFGAHILAAFIVYLNKQRILHQSSSSYQVARTVWNQLANTDWTKGISLAVDPIQTEELNKFAKHYDVCFIDFTGQHNLCANIPLYLYQRVREEAKLAVELLNDMKLNSFPLIFMQKCPLYSRVDNILKISNYSCINQMLTLHSQPRIKYDFANYGYPQLLHLLTELLKKGLAERVHSILPLETATAAWPVENKAPVIGKYIQLGLILQPEHAYEVLNKGPAANDDPAGAEEFRRFWGEKSNLRRFQDGSITEAVVWGTAQDSPAKKRLIVRHIVLHLLEHHLQLDSKEVQYIGGELDQVYKLSPWFKVNKLKTKLSLDQDTDAEALSPHVIRCYDELARQLHGLNDLPLEIVSISGVSPIFRYCEPQPVLPQALLVENRILASTIQRVVIQLGQSGKWPTELSALRALKTAFLIEIGEKLEAQCRLHWVISADGLLVLKQGYCFLIELAHNKELALLKQEVTERGITTYVDNAASRFLERQHYILPKVSGALHSLHQTYSAFGSTVLLAKRWLATQLLDDGLWPDMATELLVAHLFQQRYAPQSIAAPQTGFIRFLQLLSHSDFNGELFLLNFNNSWQEQQIADLEHNYRSNRQSYPPLAVATSYDMQHAGRLWTSDQSPSQRVLGHVTRLARRALEIIETSLMSKDLRFVRPAQLFRASNEGYDLVIQFKPDLVPNSLSYDLGSPFVSFSQPNFSLPRAGSDYIARIVGLLRSAYSDFAAFFYNPHGGKELAIVWRPTTEFAAKPFKVTELQACSPSGNGKVQVLKETLLEDFKLLLKDFYLRIATPEELKREQREHQKPMRYFEANQAVAESKPKPKKHGKRKGTGKAAPPKKKRLIKSSTLKALK.

Disordered stretches follow at residues 1 to 74 (MPGK…NVKP) and 1140 to 1196 (KREQ…KALK). Basic and acidic residues-rich tracts occupy residues 22 to 31 (HAEDHSDLEH) and 65 to 74 (HRGDTKNVKP). A compositionally biased stretch (basic residues) spans 1165 to 1187 (KPKKHGKRKGTGKAAPPKKKRLI).

Belongs to the NRAP family. Part of the small subunit (SSU) processome, composed of more than 70 proteins and the RNA chaperone small nucleolar RNA (snoRNA) U3.

It is found in the nucleus. The protein resides in the nucleolus. The protein localises to the chromosome. Its function is as follows. Part of the small subunit (SSU) processome, first precursor of the small eukaryotic ribosomal subunit. During the assembly of the SSU processome in the nucleolus, many ribosome biogenesis factors, an RNA chaperone and ribosomal proteins associate with the nascent pre-rRNA and work in concert to generate RNA folding, modifications, rearrangements and cleavage as well as targeted degradation of pre-ribosomal RNA by the RNA exosome. The protein is Nucleolar protein 6 of Drosophila simulans (Fruit fly).